A 561-amino-acid polypeptide reads, in one-letter code: Putative transport protein YbjL (561 aa).

The next 5 membrane-spanning stretches (helical) occupy residues 8–28 (LLNG…LCLG), 32–52 (LGSI…LLGQ), 66–86 (FMLF…SIFF), 94–114 (MLAL…GKLF), and 158–178 (NLSL…IVGA). RCK C-terminal domains follow at residues 200-288 (RGLD…SFRN) and 292-373 (VFDR…RIGF). The next 5 membrane-spanning stretches (helical) occupy residues 383–403 (LLAF…TFQF), 406–426 (FSFG…LGFM), 451–471 (VFMA…LGAI), 475–495 (MLIA…LFGA), and 540–560 (AIAN…WPGL).

Belongs to the AAE transporter (TC 2.A.81) family. YbjL subfamily.

Its subcellular location is the cell membrane. This chain is Putative transport protein YbjL, found in Shigella sonnei (strain Ss046).